Reading from the N-terminus, the 67-residue chain is Large ribosomal subunit protein eL24 (67 aa).

Cys-7, Cys-10, Cys-33, and Cys-37 together coordinate Zn(2+). The C4-type zinc-finger motif lies at 7–37 (CSYCGKPFEPGTGKMFVRNDGRVLFFCSRKC).

This sequence belongs to the eukaryotic ribosomal protein eL24 family. Part of the 50S ribosomal subunit. Forms a cluster with proteins L3 and L14. Zn(2+) is required as a cofactor.

In terms of biological role, binds to the 23S rRNA. In Pyrococcus abyssi (strain GE5 / Orsay), this protein is Large ribosomal subunit protein eL24.